The following is a 213-amino-acid chain: Ras-related protein Rab-25 (213 aa).

GTP-binding residues include Ser21, Gly24, Lys25, Thr26, Asn27, Ser38, His39, Thr43, and Thr44. Thr26 contributes to the Mg(2+) binding site. 2 short sequence motifs (switch) span residues 35 to 49 (NEFS…GVEF) and 67 to 84 (DTAG…YYRG). 2 residues coordinate Mg(2+): Thr44 and Asp67. Residues Gly70, Asn125, Lys126, Asp128, Ala156, and Leu157 each coordinate GTP. Residues Cys209 and Cys210 are each lipidated (S-geranylgeranyl cysteine). A Cysteine methyl ester modification is found at Cys210. A propeptide spans 211 to 213 (ISL) (removed in mature form).

It belongs to the small GTPase superfamily. Rab family. As to quaternary structure, interacts (GTP-bound form) with RAB11FIP1, RAB11FIP2, RAB11FIP3 and RAB11FIP4. Interacts (via the hypervariable C-terminal region) with ITGB1 (via the cytoplasmic region); the interaction is GTP-dependent. Interacts with ITGAV. Associates with the integrin alpha-V/beta-1 heterodimer. Interacts with VPS33B. The cofactor is Mg(2+). Expression is restricted to epithelial cells. Expressed in ovarian epithelium (NOE) and breast tissue. Expressed in ovarian cancer; expression is increased relative to NOE cells. Expression in ovarian cancer is stage dependent, with stage III and stage IV showing higher levels than early stage cancers. Expressed in breast cancer; expression is increased relative to normal breast tissue.

Its subcellular location is the cell membrane. It is found in the cytoplasmic vesicle. The protein localises to the cell projection. The protein resides in the pseudopodium membrane. The enzyme catalyses GTP + H2O = GDP + phosphate + H(+). With respect to regulation, regulated by guanine nucleotide exchange factors (GEFs) which promote the exchange of bound GDP for free GTP. Regulated by GTPase activating proteins (GAPs) which increase the GTP hydrolysis activity. Inhibited by GDP dissociation inhibitors (GDIs) which prevent Rab-GDP dissociation. Its function is as follows. The small GTPases Rab are key regulators of intracellular membrane trafficking, from the formation of transport vesicles to their fusion with membranes. Rabs cycle between an inactive GDP-bound form and an active GTP-bound form that is able to recruit to membranes different set of downstream effectors directly responsible for vesicle formation, movement, tethering and fusion. RAB25 regulates epithelial cell differentiation, proliferation and survival, thereby playing key roles in tumorigenesis. Promotes invasive migration of cells in which it functions to localize and maintain integrin alpha-V/beta-1 at the tips of extending pseudopodia. Involved in the regulation of epithelial morphogenesis through the control of CLDN4 expression and localization at tight junctions. May selectively regulate the apical recycling pathway. Together with MYO5B regulates transcytosis. In Homo sapiens (Human), this protein is Ras-related protein Rab-25.